Reading from the N-terminus, the 518-residue chain is Serine--tRNA ligase, mitochondrial (518 aa).

Residues Met1 to Phe34 constitute a mitochondrion transit peptide. Lys110 bears the N6-acetyllysine mark. Lys195 carries the N6-succinyllysine modification. An L-serine-binding site is contributed by Thr299–Glu301. Residue Arg330–Glu332 participates in ATP binding. Residue Lys337 is modified to N6-succinyllysine. Val345 provides a ligand contact to ATP. Residue Glu352 coordinates L-serine. Glu418 to Ser421 is a binding site for ATP. Residue Thr453 participates in L-serine binding. Residues Pro497–Arg518 form a disordered region.

Belongs to the class-II aminoacyl-tRNA synthetase family. Type-1 seryl-tRNA synthetase subfamily. Homodimer. The tRNA molecule probably binds across the dimer. Ubiquitous.

The protein resides in the mitochondrion matrix. The catalysed reaction is tRNA(Ser) + L-serine + ATP = L-seryl-tRNA(Ser) + AMP + diphosphate + H(+). It carries out the reaction tRNA(Sec) + L-serine + ATP = L-seryl-tRNA(Sec) + AMP + diphosphate + H(+). It participates in aminoacyl-tRNA biosynthesis; selenocysteinyl-tRNA(Sec) biosynthesis; L-seryl-tRNA(Sec) from L-serine and tRNA(Sec): step 1/1. Catalyzes the attachment of serine to tRNA(Ser). Is also probably able to aminoacylate tRNA(Sec) with serine, to form the misacylated tRNA L-seryl-tRNA(Sec), which will be further converted into selenocysteinyl-tRNA(Sec). The chain is Serine--tRNA ligase, mitochondrial (Sars2) from Mus musculus (Mouse).